A 374-amino-acid chain; its full sequence is Mitochondrial import inner membrane translocase subunit tim50 (374 aa).

A mitochondrion-targeting transit peptide spans 1–48; it reads MILNKVAKCYGKQIGFFGNKTTQFIKPNQTIFLIGGTKRLFTTQQQQS. A disordered region spans residues 42 to 97; the sequence is TTQQQQSPKKEEPKSEQQKKVEDKTEEKEKEKDEEENENEKEKENEDGEGQKKKSK. 2 stretches are compositionally biased toward basic and acidic residues: residues 49–72 and 81–93; these read PKKE…KEKE and EKEK…EGQK. The helical transmembrane segment at 103–125 threads the bilayer; it reads IVTSVTSTFFAGVLVASTFGYLT. The FCP1 homology domain occupies 191-332; that stretch reads PGGKKYTLVI…IELLPVLESF (142 aa).

This sequence belongs to the TIM50 family. In terms of assembly, component of the mitochondrial import inner membrane translocase complex.

Its subcellular location is the mitochondrion inner membrane. In terms of biological role, component of the mitochondrial import inner membrane translocase that mediates the translocation of transit peptide-containing proteins across the mitochondrial inner membrane. The chain is Mitochondrial import inner membrane translocase subunit tim50 (timm50) from Dictyostelium discoideum (Social amoeba).